Reading from the N-terminus, the 278-residue chain is Sulfur carrier protein FdhD (278 aa).

The active-site Cysteine persulfide intermediate is C121. Mo-bis(molybdopterin guanine dinucleotide) is bound at residue 260-265 (FCKPGR).

This sequence belongs to the FdhD family.

It is found in the cytoplasm. Its function is as follows. Required for formate dehydrogenase (FDH) activity. Acts as a sulfur carrier protein that transfers sulfur from IscS to the molybdenum cofactor prior to its insertion into FDH. This chain is Sulfur carrier protein FdhD, found in Klebsiella pneumoniae subsp. pneumoniae (strain ATCC 700721 / MGH 78578).